The primary structure comprises 382 residues: MSDGRVNADPQQEENMVKPPVKRSLTLLIVTYFFLFFGSIASSLLAKYYFVYGGSSRWVSTWVQSAGFPLLLILIYFPHYVLKTTTRRPFTRFTLRHLIFSVLIGLVLGFNNFLFSWGTSYLPVSTSSLLLSTQLVFTLILSRIIVKQKITFSNLNCVVLLTLSSVLLALDSSKDKPSGLTKTKYFIGYVSTIGAGLLFALYLPVTEKLYRTVYCYAMVMEVQLVMEFAATVFATIGMACEGGFKEMVKEANHVFTKGPTFYWTFAILANVVTWQLSFAATSGMVYLTSGITGGICMTALLAMNVIGGVVAYGDVFGGVKIVSTVLCIWGFSSYTYGMYMKMKKEEKEKGEYSGVKTTEDSGEMEVEMGNVKDDVAAADDRA.

Transmembrane regions (helical) follow at residues 25–45, 62–82, 98–118, 121–141, 150–170, 185–205, 224–244, 260–280, 291–311, and 315–335; these read LTLL…SSLL, WVQS…HYVL, LIFS…FSWG, YLPV…TLIL, ITFS…LLAL, YFIG…YLPV, LVME…EGGF, TFYW…SFAA, ITGG…GVVA, and VFGG…SSYT. In terms of domain architecture, EamA spans 66 to 170; the sequence is AGFPLLLILI…LTLSSVLLAL (105 aa). Residues 345–364 form a disordered region; the sequence is EEKEKGEYSGVKTTEDSGEM.

Belongs to the purine permeases (TC 2.A.7.14) family.

It localises to the membrane. This Arabidopsis thaliana (Mouse-ear cress) protein is Probable purine permease 4 (PUP4).